A 114-amino-acid polypeptide reads, in one-letter code: NADH-ubiquinone oxidoreductase chain 3 (114 aa).

3 helical membrane-spanning segments follow: residues 3–23 (LITLIIMAMAMTTALYTINTY), 52–72 (IQFFLVAILFILFDLEIVLLL), and 86–106 (TILLITMLLTILTLGLLYEWL).

Belongs to the complex I subunit 3 family.

Its subcellular location is the mitochondrion membrane. It catalyses the reaction a ubiquinone + NADH + 5 H(+)(in) = a ubiquinol + NAD(+) + 4 H(+)(out). Functionally, core subunit of the mitochondrial membrane respiratory chain NADH dehydrogenase (Complex I) that is believed to belong to the minimal assembly required for catalysis. Complex I functions in the transfer of electrons from NADH to the respiratory chain. The immediate electron acceptor for the enzyme is believed to be ubiquinone. In Lycodon semicarinatus (Ryukyu odd-tooth snake), this protein is NADH-ubiquinone oxidoreductase chain 3 (MT-ND3).